A 266-amino-acid chain; its full sequence is Nitrate import ATP-binding protein NrtD (266 aa).

The 232-residue stretch at 3–234 folds into the ABC transporter domain; sequence LEITDLNRVF…DEETPKNRTY (232 aa). 39 to 46 serves as a coordination point for ATP; the sequence is GASGSGKS.

It belongs to the ABC transporter superfamily. Nitrate/nitrite/cyanate uptake transporter (NitT) (TC 3.A.1.16) family. As to quaternary structure, the complex is composed of two ATP-binding proteins (NrtC and NrtD), two transmembrane proteins (NrtB) and a solute-binding protein (NrtA).

It is found in the cell inner membrane. It catalyses the reaction nitrate(out) + ATP + H2O = nitrate(in) + ADP + phosphate + H(+). Functionally, part of the ABC transporter complex NrtABCD involved in nitrate uptake. The complex is probably also involved in nitrite transport. Probably responsible for energy coupling to the transport system. This is Nitrate import ATP-binding protein NrtD (nrtD) from Synechocystis sp. (strain ATCC 27184 / PCC 6803 / Kazusa).